Reading from the N-terminus, the 124-residue chain is NAD(P)H-quinone oxidoreductase subunit 5, chloroplastic (124 aa).

Transmembrane regions (helical) follow at residues 22-42 (TPIS…FLVA), 44-64 (LLPL…IGII), and 91-111 (LGYM…FHLI).

It belongs to the complex I subunit 5 family. As to quaternary structure, NDH is composed of at least 16 different subunits, 5 of which are encoded in the nucleus.

The protein localises to the plastid. It localises to the chloroplast thylakoid membrane. It catalyses the reaction a plastoquinone + NADH + (n+1) H(+)(in) = a plastoquinol + NAD(+) + n H(+)(out). It carries out the reaction a plastoquinone + NADPH + (n+1) H(+)(in) = a plastoquinol + NADP(+) + n H(+)(out). In terms of biological role, NDH shuttles electrons from NAD(P)H:plastoquinone, via FMN and iron-sulfur (Fe-S) centers, to quinones in the photosynthetic chain and possibly in a chloroplast respiratory chain. The immediate electron acceptor for the enzyme in this species is believed to be plastoquinone. Couples the redox reaction to proton translocation, and thus conserves the redox energy in a proton gradient. The polypeptide is NAD(P)H-quinone oxidoreductase subunit 5, chloroplastic (ndhF) (Pisum sativum (Garden pea)).